Here is a 400-residue protein sequence, read N- to C-terminus: Nicotinate phosphoribosyltransferase (400 aa).

His-220 is subject to Phosphohistidine; by autocatalysis.

It belongs to the NAPRTase family. In terms of processing, transiently phosphorylated on a His residue during the reaction cycle. Phosphorylation strongly increases the affinity for substrates and increases the rate of nicotinate D-ribonucleotide production. Dephosphorylation regenerates the low-affinity form of the enzyme, leading to product release.

The enzyme catalyses nicotinate + 5-phospho-alpha-D-ribose 1-diphosphate + ATP + H2O = nicotinate beta-D-ribonucleotide + ADP + phosphate + diphosphate. It participates in cofactor biosynthesis; NAD(+) biosynthesis; nicotinate D-ribonucleotide from nicotinate: step 1/1. Functionally, catalyzes the synthesis of beta-nicotinate D-ribonucleotide from nicotinate and 5-phospho-D-ribose 1-phosphate at the expense of ATP. The sequence is that of Nicotinate phosphoribosyltransferase from Escherichia coli O127:H6 (strain E2348/69 / EPEC).